Here is a 239-residue protein sequence, read N- to C-terminus: Large ribosomal subunit protein uL3 (239 aa).

2 disordered regions span residues 140-164 and 211-239; these read SHRS…KMPG and PLPK…QEGA. Position 151 is an N5-methylglutamine (glutamine 151).

It belongs to the universal ribosomal protein uL3 family. Part of the 50S ribosomal subunit. Forms a cluster with proteins L14 and L19. In terms of processing, methylated by PrmB.

One of the primary rRNA binding proteins, it binds directly near the 3'-end of the 23S rRNA, where it nucleates assembly of the 50S subunit. In Bradyrhizobium sp. (strain ORS 278), this protein is Large ribosomal subunit protein uL3.